The following is a 64-amino-acid chain: DNA gyrase inhibitor YacG (64 aa).

Residues Cys9, Cys12, Cys28, and Cys32 each contribute to the Zn(2+) site.

This sequence belongs to the DNA gyrase inhibitor YacG family. Interacts with GyrB. It depends on Zn(2+) as a cofactor.

Functionally, inhibits all the catalytic activities of DNA gyrase by preventing its interaction with DNA. Acts by binding directly to the C-terminal domain of GyrB, which probably disrupts DNA binding by the gyrase. The protein is DNA gyrase inhibitor YacG of Enterobacter sp. (strain 638).